The following is an 872-amino-acid chain: Lysosomal cholesterol signaling protein (872 aa).

Residues 1–40 (MNSFSNLPAENLTIAVNMTKTLPTAVMHGFNSTNDPPSMS) are Lumenal-facing. The segment at 3–372 (SFSNLPAENL…SAWLLTFPTM (370 aa)) is PIN-like transporter. Residues asparagine 11, asparagine 17, and asparagine 31 are each glycosylated (N-linked (GlcNAc...) asparagine). Residues 41 to 61 (ITRLFPALLECFGIVLCGYIA) form a helical membrane-spanning segment. Residues phenylalanine 45 and tyrosine 59 each coordinate cholesterol. The Cytoplasmic portion of the chain corresponds to 62 to 81 (GRANVITSTQAKGLGNFVSR). A helical membrane pass occupies residues 82–102 (FALPALLFKNMVVLNFSNVDW). The Lumenal segment spans residues 103–106 (SFLY). A helical membrane pass occupies residues 107–127 (SILIAKASVFFIVCVLTLLVA). At 128 to 135 (SPDSRFSK) the chain is on the cytoplasmic side. The chain crosses the membrane as a discontinuously helical span at residues 136-156 (AGLFPIFATQSNDFALGYPIV). Residues 157 to 169 (EALYQTTYPEYLQ) lie on the Lumenal side of the membrane. The helical transmembrane segment at 170–190 (YIYLVAPISLMMLNPIGFIFC) threads the bilayer. The Cytoplasmic segment spans residues 191 to 215 (EIQKWKDTQNASQNKIKIVGLGLLR). The discontinuously helical transmembrane segment at 216–236 (VLQNPIVFMVFIGIAFNFILD) threads the bilayer. Over 237 to 245 (RKVPVYVEN) the chain is Lumenal. A discontinuously helical transmembrane segment spans residues 246–266 (FLDGLGNSFSGSALFYLGLTM). Topologically, residues 267-275 (VGKIKRLKK) are cytoplasmic. The cholesterol site is built by glycine 268, lysine 269, and isoleucine 270. The chain crosses the membrane as a helical span at residues 276 to 296 (SAFVVLILLITAKLLVLPLLC). Residues 297–317 (REMVELLDKGDSVVNHTSLSN) lie on the Lumenal side of the membrane. An N-linked (GlcNAc...) asparagine glycan is attached at asparagine 311. The chain crosses the membrane as a discontinuously helical span at residues 318 to 338 (YAFLYGVFPVAPGVAIFATQF). The Cytoplasmic segment spans residues 339 to 348 (NMEVEIITSG). The helical transmembrane segment at 349 to 369 (MVISTFVSAPIMYVSAWLLTF) threads the bilayer. The Lumenal segment spans residues 370–383 (PTMDPKPLAYAIQN). A GPCR region spans residues 382–719 (QNVSFDISIV…FGIFGLDKHL (338 aa)). A glycan (N-linked (GlcNAc...) asparagine) is linked at asparagine 383. A helical membrane pass occupies residues 384–404 (VSFDISIVSLISLIWSQAILL). The Cytoplasmic segment spans residues 405-416 (LSKKYKQLPHML). The chain crosses the membrane as a helical span at residues 417 to 437 (TTNLLIAQSIVCAGMMIWNFV). Residues 438–440 (KEK) lie on the Lumenal side of the membrane. Residues 441–461 (NFVGQILVFVLLYSSLYSTYL) form a helical membrane-spanning segment. Topologically, residues 462 to 482 (WTGLLAISLFLLKKRERVQIP) are cytoplasmic. A helical membrane pass occupies residues 483–503 (VGIIIISGWGIPALLVGVLLI). At 504-522 (TGKHSGDSIDSAFFYGKEQ) the chain is on the lumenal side. The chain crosses the membrane as a helical span at residues 523-543 (MITTAVTLFCSILIAGISLMC). Residues 544–662 (MNRTAQAGSY…GDQQLTRHVL (119 aa)) lie on the Cytoplasmic side of the membrane. Residue arginine 659 coordinates cholesterol. Residues 663 to 683 (LCLLLIIGLFANLSSCLWWLF) traverse the membrane as a helical segment. Topologically, residues 684–693 (NQEPGRLYVE) are lumenal. Residues 694-714 (LQFFCAVFNFGQGFISFGIFG) traverse the membrane as a helical segment. The Cytoplasmic portion of the chain corresponds to 715 to 872 (LDKHLIILPF…SSPPSHSPKT (158 aa)). A DEP domain is found at 759-837 (YHRDLCIRNI…DEYLFYRFLQ (79 aa)).

As to quaternary structure, homodimer; via the transporter region and DEP domain. Interacts with the GATOR1 complex; preventing interaction between GATOR1 and KICSTOR; interaction is disrupted upon cholesterol starvation.

It is found in the lysosome membrane. Its function is as follows. Cholesterol-binding protein that acts as a regulator of mTORC1 signaling pathway. Acts as a sensor of cholesterol to signal cholesterol sufficiency to mTORC1: in presence of cholesterol, binds cholesterol, leading to disruption of the interaction between the GATOR1 and KICSTOR complexes and promotion of mTORC1 signaling. Upon cholesterol starvation, GPR155/LYCHOS is unable to perturb the association between GATOR1 and KICSTOR, leading to mTORC1 signaling inhibition. Binds indole-3-acetic acid and may play a role in tryptophan metabolism. In Pongo abelii (Sumatran orangutan), this protein is Lysosomal cholesterol signaling protein (GPR155).